The primary structure comprises 487 residues: METVQLRNPPRRQLKKLDEDSLTKQPEEVFDVLEKLGEGSYGSVYKAIHKETGQIVAIKQVPVESDLQEIIKEISIMQQCDSHHVVKYYGSYFKNTDLWIVMEYCGAGSVSDIIRLRNKTLTEDEIATILQSTLKGLEYLHFMRKIHRDIKAGNILLNTEGHAKLADFGVAGQLTDTMAKRNTVIGTPFWMAPEVIQEIGYNCVADIWSLGITAIEMAEGKPPYADIHPMRAIFMIPTNPPPTFRKPELWSDNFTDFVKQCLVKSPEQRATATQLLQHPFVKSAKGVSILRDLINEAMDVKLKRQESQQREVDQDDEENSEEDEMDSGTMVRAVGDEMGTVRVASTMTDGANTMIEHDDTLPSQLGTMVINAEDEEEEGTMKRRDETMQPAKPSFLEYFEQKEKENQINSFGKSIPGPLQNSSDWKVPQDGDYEFLKSWTVEDLQKRLLALDPMMEQEIEEIRQKYQSKRQPILDAIEAKKRRQQNF.

Methionine 1 carries the N-acetylmethionine modification. Threonine 3 bears the Phosphothreonine mark. Residues 30-281 (FDVLEKLGEG…ATQLLQHPFV (252 aa)) form the Protein kinase domain. Residues 36–44 (LGEGSYGSV) and lysine 59 each bind ATP. Catalysis depends on aspartate 149, which acts as the Proton acceptor. The residue at position 183 (threonine 183) is a Phosphothreonine; by autocatalysis. Serine 265 carries the post-translational modification Phosphoserine. The stretch at 290–310 (LRDLINEAMDVKLKRQESQQR) forms a coiled coil. Residues 303-312 (KRQESQQREV) show a composition bias toward basic and acidic residues. The disordered stretch occupies residues 303 to 332 (KRQESQQREVDQDDEENSEEDEMDSGTMVR). A compositionally biased stretch (acidic residues) spans 313–326 (DQDDEENSEEDEMD). Phosphoserine is present on serine 320. Threonine 340 and threonine 367 each carry phosphothreonine. A Phosphothreonine; by PKB/AKT1 modification is found at threonine 387. Phosphoserine occurs at positions 410 and 414. The residue at position 433 (tyrosine 433) is a Phosphotyrosine. Residues 433–480 (YEFLKSWTVEDLQKRLLALDPMMEQEIEEIRQKYQSKRQPILDAIEAK) form the SARAH domain.

The protein belongs to the protein kinase superfamily. STE Ser/Thr protein kinase family. STE20 subfamily. As to quaternary structure, homodimer; mediated via the coiled-coil region. Interacts with NORE1, which inhibits autoactivation. Interacts with and stabilizes SAV1. Interacts with RASSF1. Interacts with FOXO3. Interacts with RASSF2 (via SARAH domain). Interacts with AR, PKB/AKT1, TNNI3 and SIRT1. Interacts with DLG5 (via PDZ domain 3). Interacts with MARK3 and SCRIB in the presence of DLG5. It depends on Mg(2+) as a cofactor. In terms of processing, autophosphorylated on serine and threonine residues. Phosphorylation at Thr-387 by PKB/AKT1, leads to inhibition of its: kinase activity, nuclear translocation and autophosphorylation at Thr-183. It also diminishes its cleavage by caspases and its ability to phosphorylate FOXO3. Proteolytically cleaved by caspase-3 during apoptosis at Asp-326 and Asp-349 resulting in a 37 kDa or a 39 kDa subunit respectively. The 39 kDa subunit is further cleaved into the 37 kDa form. Proteolytic cleavage results in kinase activation and nuclear translocation of the truncated form (MST1/N). It is less likely that cleavage at Asp-349 is a prerequisite for activation as this site is not conserved in the murine ortholog.

The protein localises to the cytoplasm. It is found in the nucleus. It carries out the reaction L-seryl-[protein] + ATP = O-phospho-L-seryl-[protein] + ADP + H(+). The catalysed reaction is L-threonyl-[protein] + ATP = O-phospho-L-threonyl-[protein] + ADP + H(+). Its activity is regulated as follows. Inhibited by the C-terminal non-catalytic region. Activated by caspase-cleavage. Full activation also requires homodimerization and autophosphorylation of Thr-183. Activated by RASSF1 which acts by preventing its dephosphorylation. Functionally, stress-activated, pro-apoptotic kinase which, following caspase-cleavage, enters the nucleus and induces chromatin condensation followed by internucleosomal DNA fragmentation. Key component of the Hippo signaling pathway which plays a pivotal role in organ size control and tumor suppression by restricting proliferation and promoting apoptosis. The core of this pathway is composed of a kinase cascade wherein STK3/MST2 and STK4/MST1, in complex with its regulatory protein SAV1, phosphorylates and activates LATS1/2 in complex with its regulatory protein MOB1, which in turn phosphorylates and inactivates YAP1 oncoprotein and WWTR1/TAZ. Phosphorylation of YAP1 by LATS2 inhibits its translocation into the nucleus to regulate cellular genes important for cell proliferation, cell death, and cell migration. STK3/MST2 and STK4/MST1 are required to repress proliferation of mature hepatocytes, to prevent activation of facultative adult liver stem cells (oval cells), and to inhibit tumor formation. Phosphorylates 'Ser-14' of histone H2B (H2BS14ph) during apoptosis. Phosphorylates FOXO3 upon oxidative stress, which results in its nuclear translocation and cell death initiation. Phosphorylates MOBKL1A, MOBKL1B and RASSF2. Phosphorylates TNNI3 (cardiac Tn-I) and alters its binding affinity to TNNC1 (cardiac Tn-C) and TNNT2 (cardiac Tn-T). Phosphorylates FOXO1 on 'Ser-212' and regulates its activation and stimulates transcription of PMAIP1 in a FOXO1-dependent manner. Phosphorylates SIRT1 and inhibits SIRT1-mediated p53/TP53 deacetylation, thereby promoting p53/TP53 dependent transcription and apoptosis upon DNA damage. Acts as an inhibitor of PKB/AKT1. Phosphorylates AR on 'Ser-650' and suppresses its activity by intersecting with PKB/AKT1 signaling and antagonizing formation of AR-chromatin complexes. The polypeptide is Serine/threonine-protein kinase 4 (STK4) (Aotus nancymaae (Ma's night monkey)).